A 408-amino-acid polypeptide reads, in one-letter code: Transmembrane protein 237 (408 aa).

The span at 1-14 (MRTDSGARLEEGHL) shows a compositional bias: basic and acidic residues. The tract at residues 1–137 (MRTDSGARLE…RRKTKKTQPA (137 aa)) is disordered. Residues serine 25 and serine 49 each carry the phosphoserine modification. Positions 60–77 (RPSEGNEPSTKELKEHPE) are enriched in basic and acidic residues. Low complexity predominate over residues 95–106 (TSSTQKKSSSSS). Transmembrane regions (helical) follow at residues 227–247 (MIGL…IVVI), 268–288 (LAYP…ISAF), 303–323 (FLAL…LILS), and 358–378 (WIVV…FLSY).

This sequence belongs to the TMEM237 family. Part of the tectonic-like complex (also named B9 complex). Interacts with TMEM107.

Its subcellular location is the membrane. The protein resides in the cell projection. It is found in the cilium. Component of the transition zone in primary cilia. Required for ciliogenesis. The sequence is that of Transmembrane protein 237 (TMEM237) from Homo sapiens (Human).